We begin with the raw amino-acid sequence, 742 residues long: Phosphoribosylformylglycinamidine synthase subunit PurL (742 aa).

His-54 is an active-site residue. ATP is bound by residues Tyr-57 and Lys-96. Glu-98 is a Mg(2+) binding site. Substrate contacts are provided by residues 99–102 (SHNH) and Arg-121. The active-site Proton acceptor is the His-100. Residue Asp-122 coordinates Mg(2+). Position 245 (Gln-245) interacts with substrate. Asp-273 serves as a coordination point for Mg(2+). Residue 317–319 (ESQ) participates in substrate binding. Residues Asp-500 and Gly-537 each contribute to the ATP site. Asn-538 lines the Mg(2+) pocket. Ser-540 serves as a coordination point for substrate.

Belongs to the FGAMS family. Monomer. Part of the FGAM synthase complex composed of 1 PurL, 1 PurQ and 2 PurS subunits.

It is found in the cytoplasm. It carries out the reaction N(2)-formyl-N(1)-(5-phospho-beta-D-ribosyl)glycinamide + L-glutamine + ATP + H2O = 2-formamido-N(1)-(5-O-phospho-beta-D-ribosyl)acetamidine + L-glutamate + ADP + phosphate + H(+). The protein operates within purine metabolism; IMP biosynthesis via de novo pathway; 5-amino-1-(5-phospho-D-ribosyl)imidazole from N(2)-formyl-N(1)-(5-phospho-D-ribosyl)glycinamide: step 1/2. Its function is as follows. Part of the phosphoribosylformylglycinamidine synthase complex involved in the purines biosynthetic pathway. Catalyzes the ATP-dependent conversion of formylglycinamide ribonucleotide (FGAR) and glutamine to yield formylglycinamidine ribonucleotide (FGAM) and glutamate. The FGAM synthase complex is composed of three subunits. PurQ produces an ammonia molecule by converting glutamine to glutamate. PurL transfers the ammonia molecule to FGAR to form FGAM in an ATP-dependent manner. PurS interacts with PurQ and PurL and is thought to assist in the transfer of the ammonia molecule from PurQ to PurL. In Geobacillus thermodenitrificans (strain NG80-2), this protein is Phosphoribosylformylglycinamidine synthase subunit PurL.